The primary structure comprises 124 residues: Peptidyl-tRNA hydrolase (124 aa).

Belongs to the PTH2 family.

The protein resides in the cytoplasm. The catalysed reaction is an N-acyl-L-alpha-aminoacyl-tRNA + H2O = an N-acyl-L-amino acid + a tRNA + H(+). Its function is as follows. The natural substrate for this enzyme may be peptidyl-tRNAs which drop off the ribosome during protein synthesis. The sequence is that of Peptidyl-tRNA hydrolase from Aeropyrum pernix (strain ATCC 700893 / DSM 11879 / JCM 9820 / NBRC 100138 / K1).